A 362-amino-acid chain; its full sequence is 3-dehydroquinate synthase (362 aa).

Residues 71-76 (DGEQYK), 105-109 (GVIGD), 129-130 (TT), Lys142, Lys151, and 169-172 (CLKT) each bind NAD(+). Positions 184, 247, and 264 each coordinate Zn(2+).

The protein belongs to the sugar phosphate cyclases superfamily. Dehydroquinate synthase family. Co(2+) is required as a cofactor. It depends on Zn(2+) as a cofactor. NAD(+) serves as cofactor.

It localises to the cytoplasm. The catalysed reaction is 7-phospho-2-dehydro-3-deoxy-D-arabino-heptonate = 3-dehydroquinate + phosphate. The protein operates within metabolic intermediate biosynthesis; chorismate biosynthesis; chorismate from D-erythrose 4-phosphate and phosphoenolpyruvate: step 2/7. Its function is as follows. Catalyzes the conversion of 3-deoxy-D-arabino-heptulosonate 7-phosphate (DAHP) to dehydroquinate (DHQ). The chain is 3-dehydroquinate synthase from Salmonella agona (strain SL483).